Reading from the N-terminus, the 444-residue chain is Exodeoxyribonuclease 7 large subunit (444 aa).

Belongs to the XseA family. As to quaternary structure, heterooligomer composed of large and small subunits.

The protein resides in the cytoplasm. The catalysed reaction is Exonucleolytic cleavage in either 5'- to 3'- or 3'- to 5'-direction to yield nucleoside 5'-phosphates.. Functionally, bidirectionally degrades single-stranded DNA into large acid-insoluble oligonucleotides, which are then degraded further into small acid-soluble oligonucleotides. This Rickettsia akari (strain Hartford) protein is Exodeoxyribonuclease 7 large subunit.